A 241-amino-acid polypeptide reads, in one-letter code: Uridylate kinase (241 aa).

Lys15 to Gly18 is an ATP binding site. Residues Gly23–Gly28 form an involved in allosteric activation by GTP region. Gly57 lines the UMP pocket. ATP is bound by residues Gly58 and Arg62. Residues Asp77 and Thr138 to Thr145 each bind UMP. Thr165, Phe171, and Asp174 together coordinate ATP.

Belongs to the UMP kinase family. In terms of assembly, homohexamer.

Its subcellular location is the cytoplasm. It catalyses the reaction UMP + ATP = UDP + ADP. The protein operates within pyrimidine metabolism; CTP biosynthesis via de novo pathway; UDP from UMP (UMPK route): step 1/1. Allosterically activated by GTP. Inhibited by UTP. Catalyzes the reversible phosphorylation of UMP to UDP. This chain is Uridylate kinase, found in Klebsiella pneumoniae subsp. pneumoniae (strain ATCC 700721 / MGH 78578).